The chain runs to 353 residues: Palmitoyltransferase SWF1 (353 aa).

A topological domain (lumenal) is located at residue Met1. The chain crosses the membrane as a helical span at residues 2-22 (LFTLIVCLTIISSLATFLLLF). Residues 23–61 (GDSPSFRNTPIQKLRNSLLSISRDIFQFYHWLDEKLNGQ) are Cytoplasmic-facing. Residues 62 to 82 (LLKILNWLVPVGYVMVVTVCF) form a helical membrane-spanning segment. Topologically, residues 83–100 (QQFLTHTLPMLSSPGLFR) are lumenal. Residues 101 to 121 (LFTIYFSMVLIYASTILAAFS) traverse the membrane as a helical segment. Topologically, residues 122-190 (DPGRITTINL…NNCVGYYNYK (69 aa)) are cytoplasmic. Residues 147-197 (KTCSTCHIAKPARSKHCSVCNQCFLLYDHHCVWINNCVGYYNYKWFMLFLI) form the DHHC domain. Cys177 (S-palmitoyl cysteine intermediate) is an active-site residue. Residues 191 to 211 (WFMLFLISNINMLGYGGWLCY) traverse the membrane as a helical segment. Over 212 to 233 (WALTPVSWRKITSTNNANKVTG) the chain is Lumenal. The helical transmembrane segment at 234–254 (IFLILCSIFIVITTLFTFLHL) threads the bilayer. Over 255-353 (RYIYLGVTTN…WNNLIERLKW (99 aa)) the chain is Cytoplasmic.

Belongs to the DHHC palmitoyltransferase family. SWF1 subfamily.

Its subcellular location is the endoplasmic reticulum membrane. The enzyme catalyses L-cysteinyl-[protein] + hexadecanoyl-CoA = S-hexadecanoyl-L-cysteinyl-[protein] + CoA. In terms of biological role, palmitoyltransferase that targets several endosomal SNAREs. Palmitoylates the SNAREs at cysteine residues close to the cytoplasmic end of their transmembrane domain. May have a role in the cellular quality control of transmembrane domain-containing proteins. This Candida albicans (strain SC5314 / ATCC MYA-2876) (Yeast) protein is Palmitoyltransferase SWF1 (SWF1).